Here is a 447-residue protein sequence, read N- to C-terminus: N-succinylarginine dihydrolase (447 aa).

Residues 19–28 (AGLSFGNEAS), Asn110, and 137–138 (HR) contribute to the substrate site. Residue Glu174 is part of the active site. Residue Arg213 coordinates substrate. Residue His249 is part of the active site. Substrate-binding residues include Asp251 and Asn364. Cys370 functions as the Nucleophile in the catalytic mechanism.

It belongs to the succinylarginine dihydrolase family. Homodimer.

The enzyme catalyses N(2)-succinyl-L-arginine + 2 H2O + 2 H(+) = N(2)-succinyl-L-ornithine + 2 NH4(+) + CO2. It participates in amino-acid degradation; L-arginine degradation via AST pathway; L-glutamate and succinate from L-arginine: step 2/5. Catalyzes the hydrolysis of N(2)-succinylarginine into N(2)-succinylornithine, ammonia and CO(2). The polypeptide is N-succinylarginine dihydrolase (Yersinia enterocolitica serotype O:8 / biotype 1B (strain NCTC 13174 / 8081)).